A 1122-amino-acid chain; its full sequence is Desmoglein-2 (1122 aa).

The signal sequence occupies residues 1-28 (MARSPGDRCALLLLVQLLAVVCLDFGNG). The propeptide occupies 29-54 (LHLEVFSPRNEGKPFPKHTHLVRQKR). 4 Cadherin domains span residues 55-164 (AWIT…EPVF), 165-277 (TQEV…IPVV), 278-398 (ENKM…SSVV), and 397-504 (VVSF…CPVL). The Extracellular portion of the chain corresponds to 55 to 618 (AWITAPVALR…YDNYVGLGPA (564 aa)). The N-linked (GlcNAc...) asparagine glycan is linked to Asn117. N-linked (GlcNAc...) asparagine glycosylation is found at Asn314, Asn467, and Asn519. Residues 619 to 639 (AIALMILALLLLLLVPLLLLI) form a helical membrane-spanning segment. Residues 640–1122 (CHCGGGAKGF…KHSTMQHSYS (483 aa)) lie on the Cytoplasmic side of the membrane. Phosphoserine occurs at positions 685, 706, 709, and 729. Thr808 bears the Phosphothreonine mark. Phosphoserine is present on residues Ser810, Ser814, and Ser819. Desmoglein repeat repeat units lie at residues 885–916 (AYSS…ESSV), 917–945 (SSRQ…SYAK), 946–971 (GSAV…ERVY), 972–995 (APTS…ERVI), 996–1024 (QPNG…ERES), and 1025–1055 (ILAP…ERIL). Residues 913-932 (ESSVSSRQSQKVVPPPDPVA) form a disordered region. The segment covering 914–924 (SSVSSRQSQKV) has biased composition (low complexity). Residues 1089–1122 (LPNLDLEESDRPNSTITTSSTRVTKHSTMQHSYS) form a disordered region. Positions 1100 to 1122 (PNSTITTSSTRVTKHSTMQHSYS) are enriched in polar residues. A Phosphoserine modification is found at Ser1122.

As to quaternary structure, interacts with PKP2. Interacts with CTNNB1; the interaction promotes localization of CTNNB1 at cell junctions thus reducing its nuclear localization and subsequent transcription of CTNNB1/TCF-target genes. Palmitoylated by ZDHHC5 at the plasma membrane. Expressed in undifferentiated pluripotent stem cells, expression decreases during differentiation (at protein level). Expressed by embryonic stem cells, expression is reduced during differentiation (at protein level). Expressed at the apical-lateral cell membrane of kidney tubular epithelial cells (at protein level). Expressed in epidermis and heart (at protein level). Expressed in the brain, spleen, lung, liver skeletal muscle, kidney and testis.

Its subcellular location is the cell membrane. The protein resides in the cell junction. The protein localises to the desmosome. It is found in the cytoplasm. Functionally, a component of desmosome cell-cell junctions which are required for positive regulation of cellular adhesion. Involved in the interaction of plaque proteins and intermediate filaments mediating cell-cell adhesion. Required for proliferation and viability of embryonic stem cells in the blastocyst, thereby crucial for progression of post-implantation embryonic development. Maintains pluripotency by regulating epithelial to mesenchymal transition/mesenchymal to epithelial transition (EMT/MET) via interacting with and sequestering CTNNB1 to sites of cell-cell contact, thereby reducing translocation of CTNNB1 to the nucleus and subsequent transcription of CTNNB1/TCF-target genes. Promotes pluripotency and the multi-lineage differentiation potential of hematopoietic stem cells. Plays a role in endothelial cell sprouting and elongation via mediating the junctional-association of cortical actin fibers and CDH5. Plays a role in limiting inflammatory infiltration and the apoptotic response to injury in kidney tubular epithelial cells, potentially via its role in maintaining cell-cell adhesion and the epithelial barrier. The protein is Desmoglein-2 (Dsg2) of Mus musculus (Mouse).